We begin with the raw amino-acid sequence, 77 residues long: Translation initiation factor IF-1, chloroplastic (77 aa).

An S1-like domain is found at 1–71 (MKEQKLIHEG…TRGRIIYRLR (71 aa)).

It belongs to the IF-1 family. Component of the 30S ribosomal translation pre-initiation complex which assembles on the 30S ribosome in the order IF-2 and IF-3, IF-1 and N-formylmethionyl-tRNA(fMet); mRNA recruitment can occur at any time during PIC assembly.

Its subcellular location is the plastid. The protein resides in the chloroplast. In terms of biological role, one of the essential components for the initiation of protein synthesis. Stabilizes the binding of IF-2 and IF-3 on the 30S subunit to which N-formylmethionyl-tRNA(fMet) subsequently binds. Helps modulate mRNA selection, yielding the 30S pre-initiation complex (PIC). Upon addition of the 50S ribosomal subunit IF-1, IF-2 and IF-3 are released leaving the mature 70S translation initiation complex. This chain is Translation initiation factor IF-1, chloroplastic, found in Liriodendron tulipifera (Tuliptree).